The sequence spans 318 residues: uncharacterized protein (318 aa).

The stretch at leucine 67 to glutamate 157 forms a coiled coil. Positions glutamate 172–leucine 318 are disordered. Basic and acidic residues-rich tracts occupy residues asparagine 175 to lysine 193 and lysine 219 to serine 236. Polar residues predominate over residues valine 237–threonine 248. 2 stretches are compositionally biased toward basic and acidic residues: residues serine 249–alanine 274 and serine 300–glycine 310.

This is an uncharacterized protein from Staphylococcus aureus (strain Mu50 / ATCC 700699).